We begin with the raw amino-acid sequence, 265 residues long: HTH-type transcriptional activator CfaD (265 aa).

The region spanning 164-261 (DKVRNVIEKD…GVTPKQFFTY (98 aa)) is the HTH araC/xylS-type domain. DNA-binding regions (H-T-H motif) lie at residues 181–202 (GIIADAFNVSEITIRKRLESEN) and 228–251 (ISQISNMIGISSASYFIRVFNKHY).

As to quaternary structure, homodimer.

Transcriptional activator of the CFA/I adhesin (cfaA and cfaB) genes of enterotoxigenic E.coli at 37 degrees Celsius. Also represses the silencing effect of H-NS (hns). The chain is HTH-type transcriptional activator CfaD from Escherichia coli.